Consider the following 345-residue polypeptide: Phosphoribosylformylglycinamidine cyclo-ligase (345 aa).

It belongs to the AIR synthase family.

The protein resides in the cytoplasm. It carries out the reaction 2-formamido-N(1)-(5-O-phospho-beta-D-ribosyl)acetamidine + ATP = 5-amino-1-(5-phospho-beta-D-ribosyl)imidazole + ADP + phosphate + H(+). The protein operates within purine metabolism; IMP biosynthesis via de novo pathway; 5-amino-1-(5-phospho-D-ribosyl)imidazole from N(2)-formyl-N(1)-(5-phospho-D-ribosyl)glycinamide: step 2/2. This chain is Phosphoribosylformylglycinamidine cyclo-ligase, found in Anaeromyxobacter sp. (strain K).